We begin with the raw amino-acid sequence, 698 residues long: PWWP domain-containing DNA repair factor 3A (698 aa).

2 disordered regions span residues T102–Q145 and C159–P386. Position 105 is a phosphoserine (S105). A compositionally biased stretch (polar residues) spans S129–F139. 3 positions are modified to phosphoserine: S165, S168, and S170. Residues D200–D211 show a composition bias toward polar residues. Composition is skewed to basic and acidic residues over residues H212–A235 and R341–E350. S355 and S356 each carry phosphoserine. The segment covering E370–E384 has biased composition (acidic residues). Positions V399–A460 constitute a PWWP domain.

This sequence belongs to the PWWP3A family. As to quaternary structure, interacts with TP53BP1 (via BRCT domain); the interaction is not dependent on its phosphorylation status. Binds nucleosomes. Interacts with trimethylated 'Lys-36' of histone H3 (H3K36me3) (in vitro).

The protein resides in the nucleus. In terms of biological role, involved in the DNA damage response pathway by contributing to the maintenance of chromatin architecture. Recruited to the vicinity of DNA breaks by TP53BP1 and plays an accessory role to facilitate damage-induced chromatin changes and promoting chromatin relaxation. Required for efficient DNA repair and cell survival following DNA damage. This Rattus norvegicus (Rat) protein is PWWP domain-containing DNA repair factor 3A.